Consider the following 103-residue polypeptide: Integration host factor subunit alpha (103 aa).

The protein belongs to the bacterial histone-like protein family. As to quaternary structure, heterodimer of an alpha and a beta chain.

In terms of biological role, this protein is one of the two subunits of integration host factor, a specific DNA-binding protein that functions in genetic recombination as well as in transcriptional and translational control. The chain is Integration host factor subunit alpha from Bartonella bacilliformis (strain ATCC 35685 / KC583 / Herrer 020/F12,63).